The primary structure comprises 275 residues: MMANETAAKSTKSSPTPAVEPESKLKILALHGYRQNGDGFKSKLGSFRKFIGKHAELVFVTAPHIAPPLPDSEAGTEPDPAQRSWWFNKDDGTFKGTNKNGPAIGFEDSLKLVEKVWKQEQCCGLLGFSQGACFVGLLCDLSARGMTSIKPEFAVLSSGFRSGSLVHLNCYETKVQIPSLHIYGEADEIIPKEMSMALADTFTDPQILTHPGGHFLPAQASQKQTYVEFFRERLQFHLEAQEIENATAANSILVDDSGPAGNGVHDDDDDDDDSD.

The segment at methionine 1–proline 21 is disordered. A compositionally biased stretch (polar residues) spans alanine 7–threonine 16. Active-site charge relay system residues include serine 129, aspartate 187, and histidine 214. The interval leucine 253 to aspartate 275 is disordered. A compositionally biased stretch (acidic residues) spans aspartate 266–aspartate 275.

This sequence belongs to the LovG family.

The protein is Esterase AAEL000016 of Aedes aegypti (Yellowfever mosquito).